The chain runs to 474 residues: Trehalose-6-phosphate synthase (474 aa).

A D-glucose 6-phosphate-binding site is contributed by Arg10. Residue Gly22–Gly23 coordinates UDP-alpha-D-glucose. Tyr77 and Asp131 together coordinate D-glucose 6-phosphate. UDP-alpha-D-glucose is bound by residues Arg263 and Lys268. Arg301 is a D-glucose 6-phosphate binding site. UDP-alpha-D-glucose-binding positions include Phe340 and Leu366 to Glu370.

It belongs to the glycosyltransferase 20 family. Homotetramer.

It carries out the reaction D-glucose 6-phosphate + UDP-alpha-D-glucose = alpha,alpha-trehalose 6-phosphate + UDP + H(+). It functions in the pathway glycan biosynthesis; trehalose biosynthesis. In terms of biological role, probably involved in the osmoprotection via the biosynthesis of trehalose. Catalyzes the transfer of glucose from UDP-alpha-D-glucose (UDP-Glc) to D-glucose 6-phosphate (Glc-6-P) to form trehalose-6-phosphate. Acts with retention of the anomeric configuration of the UDP-sugar donor. In Shigella dysenteriae serotype 1 (strain Sd197), this protein is Trehalose-6-phosphate synthase.